Reading from the N-terminus, the 156-residue chain is Small ribosomal subunit protein uS7 (156 aa).

It belongs to the universal ribosomal protein uS7 family. Part of the 30S ribosomal subunit. Contacts proteins S9 and S11.

In terms of biological role, one of the primary rRNA binding proteins, it binds directly to 16S rRNA where it nucleates assembly of the head domain of the 30S subunit. Is located at the subunit interface close to the decoding center, probably blocks exit of the E-site tRNA. This Symbiobacterium thermophilum (strain DSM 24528 / JCM 14929 / IAM 14863 / T) protein is Small ribosomal subunit protein uS7.